The chain runs to 411 residues: Acetate kinase (411 aa).

Residue asparagine 7 participates in Mg(2+) binding. Lysine 14 lines the ATP pocket. Arginine 94 serves as a coordination point for substrate. Aspartate 151 functions as the Proton donor/acceptor in the catalytic mechanism. ATP contacts are provided by residues 211-215 (HLGNG), 285-287 (DMR), and 333-337 (GIGEN). Glutamate 387 is a Mg(2+) binding site.

This sequence belongs to the acetokinase family. Homodimer. Requires Mg(2+) as cofactor. Mn(2+) is required as a cofactor.

The protein localises to the cytoplasm. The enzyme catalyses acetate + ATP = acetyl phosphate + ADP. It participates in metabolic intermediate biosynthesis; acetyl-CoA biosynthesis; acetyl-CoA from acetate: step 1/2. In terms of biological role, catalyzes the formation of acetyl phosphate from acetate and ATP. Can also catalyze the reverse reaction. The chain is Acetate kinase from Syntrophobacter fumaroxidans (strain DSM 10017 / MPOB).